The sequence spans 207 residues: Recombination protein RecR (207 aa).

A C4-type zinc finger spans residues 60–75 (CRRCHNISDSGVCTIC). A Toprim domain is found at 83–178 (STLCVVENIR…RVSVIARGIA (96 aa)).

Belongs to the RecR family.

May play a role in DNA repair. It seems to be involved in an RecBC-independent recombinational process of DNA repair. It may act with RecF and RecO. This chain is Recombination protein RecR, found in Porphyromonas gingivalis (strain ATCC 33277 / DSM 20709 / CIP 103683 / JCM 12257 / NCTC 11834 / 2561).